The following is a 94-amino-acid chain: Cell division protein FtsB (94 aa).

Residues 1 to 3 (MRW) lie on the Cytoplasmic side of the membrane. Residues 4-21 (LTVGLLAAIGLLQYPLWV) traverse the membrane as a helical segment. Over 22 to 94 (GKGGWLKVWE…VQIPEKVPGK (73 aa)) the chain is Periplasmic. Residues 31 to 73 (EYDRQLQQQKEVTRKLEIRNAGLDAEVRDLKQGYDAIEERARF) adopt a coiled-coil conformation.

It belongs to the FtsB family. In terms of assembly, part of a complex composed of FtsB, FtsL and FtsQ.

It localises to the cell inner membrane. Functionally, essential cell division protein. May link together the upstream cell division proteins, which are predominantly cytoplasmic, with the downstream cell division proteins, which are predominantly periplasmic. This Dechloromonas aromatica (strain RCB) protein is Cell division protein FtsB.